Reading from the N-terminus, the 114-residue chain is Small ribosomal subunit protein bS6 (114 aa).

It belongs to the bacterial ribosomal protein bS6 family.

Its function is as follows. Binds together with bS18 to 16S ribosomal RNA. The polypeptide is Small ribosomal subunit protein bS6 (Bacteroides thetaiotaomicron (strain ATCC 29148 / DSM 2079 / JCM 5827 / CCUG 10774 / NCTC 10582 / VPI-5482 / E50)).